The following is a 337-amino-acid chain: Probable dual-specificity RNA methyltransferase RlmN (337 aa).

The Proton acceptor role is filled by Glu-88. A Radical SAM core domain is found at 94–322; the sequence is SSDRLTVCVS…ASIRRSRGLD (229 aa). Cys-101 and Cys-327 form a disulfide bridge. [4Fe-4S] cluster is bound by residues Cys-108, Cys-112, and Cys-115. S-adenosyl-L-methionine-binding positions include 155–156, Ser-185, 208–210, and Asn-284; these read GE and SLH. Residue Cys-327 is the S-methylcysteine intermediate of the active site.

Belongs to the radical SAM superfamily. RlmN family. The cofactor is [4Fe-4S] cluster.

The protein resides in the cytoplasm. It carries out the reaction adenosine(2503) in 23S rRNA + 2 reduced [2Fe-2S]-[ferredoxin] + 2 S-adenosyl-L-methionine = 2-methyladenosine(2503) in 23S rRNA + 5'-deoxyadenosine + L-methionine + 2 oxidized [2Fe-2S]-[ferredoxin] + S-adenosyl-L-homocysteine. The enzyme catalyses adenosine(37) in tRNA + 2 reduced [2Fe-2S]-[ferredoxin] + 2 S-adenosyl-L-methionine = 2-methyladenosine(37) in tRNA + 5'-deoxyadenosine + L-methionine + 2 oxidized [2Fe-2S]-[ferredoxin] + S-adenosyl-L-homocysteine. Its function is as follows. Specifically methylates position 2 of adenine 2503 in 23S rRNA and position 2 of adenine 37 in tRNAs. In Thermosynechococcus vestitus (strain NIES-2133 / IAM M-273 / BP-1), this protein is Probable dual-specificity RNA methyltransferase RlmN.